Here is a 234-residue protein sequence, read N- to C-terminus: MRKRLKTRIKICGMCSPEDMEMAALYGADAVGFITEVPIESPRKLDSDTAASLISKLPECLDSVMVIMPENSSRALELIEKVRPDIVQIHSNLPSVELEVIREKTDIPIIKTLSVPAGMGASRVQSPVKRLLDEVRRLEESGVVDSILLDSGIAGKTGGTGYVHDWDLSRRIADETELPLILAGGLKPENVQEAIRIVSPYAVDAASGVEILGKKDAVKIRSFIEEVRCANAFL.

This sequence belongs to the TrpF family.

It catalyses the reaction N-(5-phospho-beta-D-ribosyl)anthranilate = 1-(2-carboxyphenylamino)-1-deoxy-D-ribulose 5-phosphate. It participates in amino-acid biosynthesis; L-tryptophan biosynthesis; L-tryptophan from chorismate: step 3/5. The sequence is that of N-(5'-phosphoribosyl)anthranilate isomerase 1 (trpF1) from Methanosarcina mazei (strain ATCC BAA-159 / DSM 3647 / Goe1 / Go1 / JCM 11833 / OCM 88) (Methanosarcina frisia).